A 434-amino-acid chain; its full sequence is Trigger factor (434 aa).

A PPIase FKBP-type domain is found at 162-247; that stretch reads GDKINISLIA…FNTVEQAKLP (86 aa).

It belongs to the FKBP-type PPIase family. Tig subfamily.

The protein localises to the cytoplasm. The enzyme catalyses [protein]-peptidylproline (omega=180) = [protein]-peptidylproline (omega=0). Involved in protein export. Acts as a chaperone by maintaining the newly synthesized protein in an open conformation. Functions as a peptidyl-prolyl cis-trans isomerase. The sequence is that of Trigger factor from Methylobacillus flagellatus (strain ATCC 51484 / DSM 6875 / VKM B-1610 / KT).